Here is a 418-residue protein sequence, read N- to C-terminus: Serine hydroxymethyltransferase (418 aa).

Residues L121 and 125-127 (GHL) each bind (6S)-5,6,7,8-tetrahydrofolate. Residue K230 is modified to N6-(pyridoxal phosphate)lysine. Residues E246 and 355-357 (SPF) each bind (6S)-5,6,7,8-tetrahydrofolate.

The protein belongs to the SHMT family. In terms of assembly, homodimer. It depends on pyridoxal 5'-phosphate as a cofactor.

It localises to the cytoplasm. It catalyses the reaction (6R)-5,10-methylene-5,6,7,8-tetrahydrofolate + glycine + H2O = (6S)-5,6,7,8-tetrahydrofolate + L-serine. It participates in one-carbon metabolism; tetrahydrofolate interconversion. Its pathway is amino-acid biosynthesis; glycine biosynthesis; glycine from L-serine: step 1/1. Its function is as follows. Catalyzes the reversible interconversion of serine and glycine with tetrahydrofolate (THF) serving as the one-carbon carrier. This reaction serves as the major source of one-carbon groups required for the biosynthesis of purines, thymidylate, methionine, and other important biomolecules. Also exhibits THF-independent aldolase activity toward beta-hydroxyamino acids, producing glycine and aldehydes, via a retro-aldol mechanism. This is Serine hydroxymethyltransferase from Streptococcus pneumoniae (strain Hungary19A-6).